A 305-amino-acid polypeptide reads, in one-letter code: Tyrosine recombinase XerC (305 aa).

The Core-binding (CB) domain maps to 1 to 94 (MSSVDEFLTY…ACRSYYAWLL (94 aa)). Residues 115–292 (KLPQVLDADE…DFQHLAKVYD (178 aa)) form the Tyr recombinase domain. Residues arginine 154, lysine 178, histidine 244, arginine 247, and histidine 270 contribute to the active site. The active-site O-(3'-phospho-DNA)-tyrosine intermediate is the tyrosine 279.

This sequence belongs to the 'phage' integrase family. XerC subfamily. In terms of assembly, forms a cyclic heterotetrameric complex composed of two molecules of XerC and two molecules of XerD.

Its subcellular location is the cytoplasm. Its function is as follows. Site-specific tyrosine recombinase, which acts by catalyzing the cutting and rejoining of the recombining DNA molecules. The XerC-XerD complex is essential to convert dimers of the bacterial chromosome into monomers to permit their segregation at cell division. It also contributes to the segregational stability of plasmids. This chain is Tyrosine recombinase XerC, found in Xanthomonas axonopodis pv. citri (strain 306).